Consider the following 468-residue polypeptide: UDP-N-acetylmuramate--L-alanine ligase (468 aa).

114-120 (GTHGKTT) is a binding site for ATP.

This sequence belongs to the MurCDEF family.

It localises to the cytoplasm. The catalysed reaction is UDP-N-acetyl-alpha-D-muramate + L-alanine + ATP = UDP-N-acetyl-alpha-D-muramoyl-L-alanine + ADP + phosphate + H(+). It functions in the pathway cell wall biogenesis; peptidoglycan biosynthesis. Cell wall formation. In Methylorubrum extorquens (strain PA1) (Methylobacterium extorquens), this protein is UDP-N-acetylmuramate--L-alanine ligase.